Reading from the N-terminus, the 460-residue chain is UDP-N-acetylmuramoylalanine--D-glutamate ligase (460 aa).

117–123 lines the ATP pocket; the sequence is GTNGKTT.

This sequence belongs to the MurCDEF family.

It localises to the cytoplasm. The catalysed reaction is UDP-N-acetyl-alpha-D-muramoyl-L-alanine + D-glutamate + ATP = UDP-N-acetyl-alpha-D-muramoyl-L-alanyl-D-glutamate + ADP + phosphate + H(+). Its pathway is cell wall biogenesis; peptidoglycan biosynthesis. In terms of biological role, cell wall formation. Catalyzes the addition of glutamate to the nucleotide precursor UDP-N-acetylmuramoyl-L-alanine (UMA). This Prochlorococcus marinus (strain MIT 9313) protein is UDP-N-acetylmuramoylalanine--D-glutamate ligase.